The primary structure comprises 570 residues: Periplasmic trehalase (570 aa).

Positions 1–34 are cleaved as a signal peptide; the sequence is MIPPEIRRSVLLQKAIKLALAGTLLTFASFSATA. Residues arginine 159, 166-167, asparagine 203, 212-214, 284-286, and glycine 317 contribute to the substrate site; these read WD, RSQ, and RPE. Active-site proton donor/acceptor residues include aspartate 319 and glutamate 503. Glutamate 518 contributes to the substrate binding site. The interval 544–570 is disordered; sequence KPCDSVPSTRPASLSATPTKTPSAATQ. Residues 554–570 show a composition bias toward low complexity; the sequence is PASLSATPTKTPSAATQ.

This sequence belongs to the glycosyl hydrolase 37 family. Monomer.

Its subcellular location is the periplasm. The enzyme catalyses alpha,alpha-trehalose + H2O = alpha-D-glucose + beta-D-glucose. Provides the cells with the ability to utilize trehalose at high osmolarity by splitting it into glucose molecules that can subsequently be taken up by the phosphotransferase-mediated uptake system. In Salmonella newport (strain SL254), this protein is Periplasmic trehalase.